The following is a 361-amino-acid chain: Cobalt-precorrin-5B C(1)-methyltransferase (361 aa).

Belongs to the CbiD family.

The catalysed reaction is Co-precorrin-5B + S-adenosyl-L-methionine = Co-precorrin-6A + S-adenosyl-L-homocysteine. The protein operates within cofactor biosynthesis; adenosylcobalamin biosynthesis; cob(II)yrinate a,c-diamide from sirohydrochlorin (anaerobic route): step 6/10. Catalyzes the methylation of C-1 in cobalt-precorrin-5B to form cobalt-precorrin-6A. This is Cobalt-precorrin-5B C(1)-methyltransferase from Methanobrevibacter smithii (strain ATCC 35061 / DSM 861 / OCM 144 / PS).